A 631-amino-acid chain; its full sequence is ATP-dependent RNA helicase mrh4, mitochondrial (631 aa).

A mitochondrion-targeting transit peptide spans 1 to 39; the sequence is MYPLGRVSLPVRSPVCLFCQNRTSSLLPSAYVWQSARTM. Residues 55-111 are disordered; the sequence is PNVAKTSLKKKRNDTDRFGPFAGMNQTEARIRDDPRSRSPASLKRSKAPSDESGRKD. A compositionally biased stretch (basic and acidic residues) spans 102–111; that stretch reads APSDESGRKD. The Q motif motif lies at 143 to 176; sequence TSFDQFPLLPVVRHSIFSQALPGLHDVTPTPIQR. Residues 181–200 are disordered; the sequence is RLLDDTNKDKKPKKRAEGEP. Positions 196–408 constitute a Helicase ATP-binding domain; it reads AEGEPEYDQY…RKKYPDIQRL (213 aa). 209 to 216 is an ATP binding site; that stretch reads AETGSGKT. Residues 355–358 carry the DEAD box motif; sequence DEAD. The region spanning 442–631 is the Helicase C-terminal domain; that stretch reads DVIWSIGKAG…EGMFRGQALI (190 aa).

Belongs to the DEAD box helicase family. MRH4 subfamily.

It is found in the mitochondrion. The enzyme catalyses ATP + H2O = ADP + phosphate + H(+). In terms of biological role, ATP-binding RNA helicase involved in mitochondrial RNA metabolism. Required for maintenance of mitochondrial DNA. In Aspergillus terreus (strain NIH 2624 / FGSC A1156), this protein is ATP-dependent RNA helicase mrh4, mitochondrial (mrh4).